The following is a 566-amino-acid chain: Lamin-1 (566 aa).

The disordered stretch occupies residues 1 to 37; sequence MSSRKGTRSSRIVTLERSANSSLSNNGGGDDSFGSTL. Ser-2 carries the N-acetylserine modification. Residues 13-47 form a head region; that stretch reads VTLERSANSSLSNNGGGDDSFGSTLLETSRLQEKD. In terms of domain architecture, IF rod spans 45-387; sequence EKDHLTSLNS…ALLEGEEERL (343 aa). Residues 48–82 form a coil 1A region; the sequence is HLTSLNSRLATYIDKVRQLEQENNRLQVQIRDIEV. Positions 83–94 are linker 1; that stretch reads VEKKEKSNLADR. Residues 95-228 form a coil 1B region; the sequence is FEAEKARLRR…AFALQQHKGE (134 aa). The linker 2 stretch occupies residues 229-256; the sequence is LEEVRHKRQVDMTTYAKQINDEYQSKLQ. Positions 257 to 385 are coil 2; it reads DQIEEMRAQF…YQALLEGEEE (129 aa). Residues 386 to 566 form a tail region; that stretch reads RLNLTQEAPQ…SDPADRCSIM (181 aa). The 116-residue stretch at 435–550 folds into the LTD domain; the sequence is RRSKLNKETV…DTVSSITVEF (116 aa). The disordered stretch occupies residues 528–566; sequence GDNPSARLEDSEGDTVSSITVEFSESSDPSDPADRCSIM. Residues 541-556 show a composition bias toward polar residues; that stretch reads DTVSSITVEFSESSDP. Cys-563 carries the post-translational modification Cysteine methyl ester. Residue Cys-563 is the site of S-farnesyl cysteine attachment. Residues 564 to 566 constitute a propeptide, removed in mature form; sequence SIM.

The protein belongs to the intermediate filament family. Interacts with LEM domain proteins lem-2 and emr-1. May interact with unc-84; this interaction may be required to complete the connection between the nuclear lamina and the cytoskeleton. As to expression, ubiquitous. Expressed in all cells, except in cells undergoing spermatogenesis.

It is found in the nucleus envelope. The protein resides in the nucleus inner membrane. Its function is as follows. Major component of the nuclear lamina, a fibrous layer on the nucleoplasmic side of the inner nuclear membrane. Provides a framework for the nuclear envelope and probably also interacts with chromatin. Essential to maintain the shape and integrity of the nucleus, and for DNA replication. Involved in spatial organization of nuclear pore complexes. It is not a target for ced-3 during apoptosis, suggesting that lamin cleavage is not essential for apoptosis in C.elegans. This is Lamin-1 from Caenorhabditis elegans.